Here is a 380-residue protein sequence, read N- to C-terminus: MADPKFQNLPGIAYDQPDVYETPDDPETDTSDYYEEEPENEAIERMHISASAAHKRFSGATLEGSVDFTDRIGRRPGRGYDMRGAGEYELVGQGEKETPVQKCQRLQIEMNELLNEVAALQVDRKIADEEKQSYDAVATVISTAKKVLDTLKLEQVLGKEQVPNSKQVKALISQVEEFKQSGVLTAIPTPGTDLASTARVASLEQRLYQLEKTVGAQPEKLSRLNAATNTTNVLEAVRQLSTKAALLQPDKLDTIEQRLTTLAGKMDSIAEKSSGSSQDAKRDQKISELYDIAKRTEPVVEILPHVIERMQALESLHKYANNFAKIIAEIEHKQGTITTSLVNNKELLHSVQETFAQNLETITNKVAKVEQRVTAISTAK.

Residues 1 to 40 form a disordered region; sequence MADPKFQNLPGIAYDQPDVYETPDDPETDTSDYYEEEPEN. Residues 21–40 show a composition bias toward acidic residues; the sequence is ETPDDPETDTSDYYEEEPEN. Coiled-coil stretches lie at residues 100-135 and 353-377; these read VQKCQRLQIEMNELLNEVAALQVDRKIADEEKQSYD and ETFAQNLETITNKVAKVEQRVTAIS.

This sequence belongs to the dynactin subunit 2 family. As to quaternary structure, subunit of dynactin, a multiprotein complex associated with dynein.

It is found in the cytoplasm. It localises to the cytoskeleton. The protein localises to the membrane. In terms of biological role, modulates cytoplasmic dynein binding to an organelle, and plays a role in prometaphase chromosome alignment and spindle organization during mitosis. May play a role in synapse formation during brain development. This is Dynactin subunit 2 from Drosophila pseudoobscura pseudoobscura (Fruit fly).